The primary structure comprises 64 residues: Lantibiotic actagardine (64 aa).

The propeptide occupies methionine 1–alanine 45. The segment at residues serine 46–cysteine 51 is a cross-link (lanthionine (Ser-Cys)). 2 consecutive cross-links (beta-methyllanthionine (Thr-Cys)) follow at residues threonine 52 to cysteine 57 and threonine 54 to cysteine 62. The beta-methyllanthionine sulfoxide (Thr-Cys) cross-link spans threonine 59–cysteine 64.

This sequence belongs to the type B lantibiotic family. Post-translationally, maturation of lantibiotics involves the enzymatic conversion of Thr, and Ser into dehydrated AA by the enzyme garM and the formation of thioether bonds with cysteine. The 59-64 beta-methyllanthionine thioether bond is oxidized to a sulfoxide by the monooxygenase GarO. This is followed by membrane translocation and cleavage of the modified precursor. The sulfoxide group of the 59-64 beta-methyllanthionine thioether bond is mildly important for activity, since the antibacterial activity of deoxyactagardine is marginally lower compared with oxidized actagardine.

Has potent antibacterial activity against some Gram-positive bacteria. Has good antistreptococcal activity. Inhibits cell wall biosynthesis by binding to lipid II and blocking transglycosylation. This is Lantibiotic actagardine from Actinoplanes garbadinensis.